We begin with the raw amino-acid sequence, 73 residues long: Translation initiation factor IF-1 (73 aa).

Residues 1–72 (MSKDDLIQFT…TKGRVILRHQ (72 aa)) enclose the S1-like domain.

Belongs to the IF-1 family. In terms of assembly, component of the 30S ribosomal translation pre-initiation complex which assembles on the 30S ribosome in the order IF-2 and IF-3, IF-1 and N-formylmethionyl-tRNA(fMet); mRNA recruitment can occur at any time during PIC assembly.

It localises to the cytoplasm. In terms of biological role, one of the essential components for the initiation of protein synthesis. Stabilizes the binding of IF-2 and IF-3 on the 30S subunit to which N-formylmethionyl-tRNA(fMet) subsequently binds. Helps modulate mRNA selection, yielding the 30S pre-initiation complex (PIC). Upon addition of the 50S ribosomal subunit IF-1, IF-2 and IF-3 are released leaving the mature 70S translation initiation complex. This chain is Translation initiation factor IF-1, found in Rickettsia bellii (strain OSU 85-389).